The chain runs to 631 residues: Beta-galactosidase-1-like protein 3 (631 aa).

E203 functions as the Proton donor in the catalytic mechanism. E277 functions as the Nucleophile in the catalytic mechanism.

It belongs to the glycosyl hydrolase 35 family.

This is Beta-galactosidase-1-like protein 3 (Glb1l3) from Rattus norvegicus (Rat).